The sequence spans 352 residues: Secretion system apparatus protein SsaU (352 aa).

4 helical membrane passes run 34–54 (LIAL…ILIE), 89–109 (LGAG…GVVI), 144–164 (LKVI…ASTF), and 176–196 (VLVV…FYIV).

Belongs to the type III secretion exporter family.

It is found in the cell membrane. Part of a type III secretion system. This is Secretion system apparatus protein SsaU (ssaU) from Salmonella typhimurium (strain LT2 / SGSC1412 / ATCC 700720).